A 242-amino-acid chain; its full sequence is Ribonuclease 3 (242 aa).

Residues 10-146 (LQNFNKKFAD…FVGALYLDQG (137 aa)) form the RNase III domain. Glu-59 provides a ligand contact to Mg(2+). Residue Asp-63 is part of the active site. Asp-132 and Glu-135 together coordinate Mg(2+). The active site involves Glu-135. The region spanning 172 to 241 (DFKTQFQELI…AEKAYNDMKK (70 aa)) is the DRBM domain. A disordered region spans residues 216–242 (VAKGQGRTKKESEQKAAEKAYNDMKKK). A compositionally biased stretch (basic and acidic residues) spans 223-242 (TKKESEQKAAEKAYNDMKKK).

This sequence belongs to the ribonuclease III family. As to quaternary structure, homodimer. Mg(2+) is required as a cofactor.

Its subcellular location is the cytoplasm. The enzyme catalyses Endonucleolytic cleavage to 5'-phosphomonoester.. Digests double-stranded RNA. Involved in the processing of primary rRNA transcript to yield the immediate precursors to the large and small rRNAs (23S and 16S). Processes some mRNAs, and tRNAs when they are encoded in the rRNA operon. Processes pre-crRNA and tracrRNA of type II CRISPR loci if present in the organism. The polypeptide is Ribonuclease 3 (Staphylococcus carnosus (strain TM300)).